A 644-amino-acid chain; its full sequence is Exoribonuclease 2 (644 aa).

The region spanning 189–516 (RQDLTALNFV…NHRLLKAVIK (328 aa)) is the RNB domain. Positions 561–643 (DTRFAAEIID…DTRSIIARPA (83 aa)) constitute an S1 motif domain.

The protein belongs to the RNR ribonuclease family. RNase II subfamily.

It localises to the cytoplasm. It catalyses the reaction Exonucleolytic cleavage in the 3'- to 5'-direction to yield nucleoside 5'-phosphates.. In terms of biological role, involved in mRNA degradation. Hydrolyzes single-stranded polyribonucleotides processively in the 3' to 5' direction. The polypeptide is Exoribonuclease 2 (Salmonella arizonae (strain ATCC BAA-731 / CDC346-86 / RSK2980)).